The following is a 239-amino-acid chain: Guanylate kinase (239 aa).

The Guanylate kinase-like domain maps to 19-197 (GLLIVVTGAS…AVSELLAVQQ (179 aa)). 26-33 (GASGVGKG) provides a ligand contact to ATP.

It belongs to the guanylate kinase family.

The protein resides in the cytoplasm. The catalysed reaction is GMP + ATP = GDP + ADP. Essential for recycling GMP and indirectly, cGMP. This Deinococcus radiodurans (strain ATCC 13939 / DSM 20539 / JCM 16871 / CCUG 27074 / LMG 4051 / NBRC 15346 / NCIMB 9279 / VKM B-1422 / R1) protein is Guanylate kinase (gmk).